Reading from the N-terminus, the 193-residue chain is Protein hunchback (193 aa).

Basic residues predominate over residues 18–31 (HLHHHHAHHSHHRH). Disordered stretches follow at residues 18-57 (HLHH…SNTN) and 153-193 (LTPP…KYMA). Positions 34–44 (NSNSNASSPHQ) are enriched in low complexity. Positions 174 to 193 (EPEKEHDLMSNSSEDMKYMA) are enriched in basic and acidic residues.

Belongs to the hunchback C2H2-type zinc-finger protein family.

Its subcellular location is the nucleus. Its function is as follows. Gap class segmentation protein that controls development of head structures. This chain is Protein hunchback (hb), found in Drosophila petalopeza (Fruit fly).